A 1006-amino-acid chain; its full sequence is Zinc finger protein ZFPM1 (1006 aa).

Residues 1–13 (MSRRKQSNPRQIK) show a composition bias toward basic residues. 2 disordered regions span residues 1 to 93 (MSRR…DELE) and 114 to 133 (SWGP…RQAE). Basic and acidic residues predominate over residues 15 to 25 (SLGDMEAREEV). The segment covering 42-62 (APSPPSADVNSPPPLPPPTSP) has biased composition (pro residues). The segment covering 66-79 (KELEGQEPEPRPTE) has biased composition (basic and acidic residues). Residues S84 and S128 each carry the phosphoserine modification. The span at 121–130 (SVQTRASSPR) shows a compositional bias: polar residues. The CCHC FOG-type 1 zinc finger occupies 235-268 (VINKDVFPCKDCGIWYRSERNLQAHLLYYCASRQ). Residues C243, C246, H259, and C264 each coordinate Zn(2+). S272 is modified (phosphoserine). C2H2-type zinc fingers lie at residues 290–314 (RVCP…MRSH), 320–342 (FVCL…LKVH), and 348–371 (GVCH…VTNH). Residues 330-341 (TTKANCERHLKV) form an interaction with TACC3 region. S384 carries the phosphoserine modification. 3 disordered regions span residues 384–409 (SPGA…HTAL), 438–460 (NGEA…AAPR), and 473–515 (APIL…SPVP). A compositionally biased stretch (low complexity) spans 485–515 (APSRTPSPRSPAPARVKAELSSPTPGSSPVP). S491 and S494 each carry phosphoserine. The segment at 571 to 604 (PGAPKGATCFECEITFSNVNNYYVHKRLYCSGRR) adopts a CCHC FOG-type 2 zinc-finger fold. Residues C579, C582, H595, and C600 each coordinate Zn(2+). The interval 605–681 (APEDAPAARR…SVDDAEDDPS (77 aa)) is disordered. Residues 617–629 (APPGPARAPPGQP) show a composition bias toward pro residues. Residues S638 and S671 each carry the phosphoserine modification. Residues 677-710 (EDDPSRTLCEACNIRFSRHETYTVHKRYYCASRH) form a CCHC FOG-type 3 zinc finger. Positions 685, 688, 701, and 706 each coordinate Zn(2+). The segment at 708-810 (SRHDPPPRRP…PRRPLPGAPA (103 aa)) is disordered. Composition is skewed to pro residues over residues 715–735 (RRPA…PSPA) and 754–769 (APPP…PESP). Low complexity predominate over residues 780-791 (GLAPARSPGPAA). At S786 the chain carries Phosphoserine. Residues 794-800 (PIDLSKK) are interaction with CTBP2. A CCHC FOG-type 4 zinc finger spans residues 811–844 (PALADYHECTACRVSFHSLEAYLAHKKYSCPAAP). Positions 819, 822, 835, and 840 each coordinate Zn(2+). Residues 854 to 877 (AACPYCPPNGPVRGDLLEHFRLAH) form a C2H2-type 4 zinc finger. Residues 889-971 (GVEARTPADR…KGTPAPLPNG (83 aa)) are disordered. Residues S901, S909, S914, and S935 each carry the phosphoserine modification. Positions 925-950 (PQEPPPGPPPSPAAAPEAVPPPPAPP) are enriched in pro residues. The segment at 968–1001 (LPNGNHRYCRLCNIKFSSLSTFIAHKKYYCSSHA) adopts a CCHC FOG-type 5 zinc-finger fold. 4 residues coordinate Zn(2+): C976, C979, H992, and C997.

Belongs to the FOG (Friend of GATA) family. In terms of assembly, interacts with corepressor CTBP2; this interaction is however not essential for corepressor activity. Interacts with the N-terminal zinc-finger of GATA1, GATA2 and probably GATA3. Mainly expressed in hematopoietic tissues. Also expressed in adult cerebellum, stomach, lymph node, liver and pancreas. Expressed in fetal heart, liver and spleen.

The protein resides in the nucleus. Functionally, transcription regulator that plays an essential role in erythroid and megakaryocytic cell differentiation. Essential cofactor that acts via the formation of a heterodimer with transcription factors of the GATA family GATA1, GATA2 and GATA3. Such heterodimer can both activate or repress transcriptional activity, depending on the cell and promoter context. The heterodimer formed with GATA proteins is essential to activate expression of genes such as NFE2, ITGA2B, alpha- and beta-globin, while it represses expression of KLF1. May be involved in regulation of some genes in gonads. May also be involved in cardiac development, in a non-redundant way with ZFPM2/FOG2. The chain is Zinc finger protein ZFPM1 (ZFPM1) from Homo sapiens (Human).